The sequence spans 333 residues: Taste receptor type 2 member 38 (333 aa).

The Extracellular portion of the chain corresponds to 1–17 (MLTLTRIHTVSYEVRST). Residues 18 to 38 (FLFISVLEFAVGFLTNAFVFL) traverse the membrane as a helical segment. Over 39–55 (VNFWDVVKRQPLSNSDC) the chain is Cytoplasmic. A helical membrane pass occupies residues 56–76 (VLLCLSISRLFLHGLLFLSAI). At 77–94 (QLTHFQKLSEPLNHSYQA) the chain is on the extracellular side. A helical transmembrane segment spans residues 95 to 115 (IIMLWMIANQANLWLAACLSL). The Cytoplasmic segment spans residues 116–142 (LYCSKLIRFSHTFLICLASWVSRKISQ). A helical membrane pass occupies residues 143-163 (MLLGIILCSCICTVLCVWCFF). Topologically, residues 164-190 (SRPHFTVTTVLFMNNNTRLNWQIKDLN) are extracellular. An N-linked (GlcNAc...) asparagine glycan is attached at Asn-178. The helical transmembrane segment at 191–211 (LFYSFLFCYLWSVPPFLLFLV) threads the bilayer. Topologically, residues 212-251 (SSGMLTVSLGRHMRTMKVYTRDSRDPSLEAHIKALKSLVS) are cytoplasmic. Residues 252–272 (FFCFFVISSCAAFISVPLLIL) traverse the membrane as a helical segment. The Extracellular segment spans residues 273 to 276 (WRDK). A helical membrane pass occupies residues 277-297 (IGVMVCVGIMAACPSGHAAVL). The Cytoplasmic segment spans residues 298–333 (ISGNAKLRRAVTTILLWAQSSLKVRADHKADSRTLC).

The protein belongs to the G-protein coupled receptor T2R family.

It is found in the membrane. Its function is as follows. Receptor that may play a role in the perception of bitterness and is gustducin-linked. May play a role in sensing the chemical composition of the gastrointestinal content. The activity of this receptor may stimulate alpha gustducin, mediate PLC-beta-2 activation and lead to the gating of TRPM5. The polypeptide is Taste receptor type 2 member 38 (TAS2R38) (Pan troglodytes (Chimpanzee)).